The following is a 127-amino-acid chain: Small ribosomal subunit protein uS11 (127 aa).

Belongs to the universal ribosomal protein uS11 family. Part of the 30S ribosomal subunit. Interacts with proteins S7 and S18. Binds to IF-3.

Located on the platform of the 30S subunit, it bridges several disparate RNA helices of the 16S rRNA. Forms part of the Shine-Dalgarno cleft in the 70S ribosome. This is Small ribosomal subunit protein uS11 from Rickettsia africae (strain ESF-5).